We begin with the raw amino-acid sequence, 988 residues long: Transcriptional regulator of yeast form adherence 5 (988 aa).

C2H2-type zinc fingers lie at residues Tyr-7 to His-29 and Phe-35 to His-59. Positions His-59–Leu-83 are enriched in polar residues. Disordered regions lie at residues His-59–Gly-129 and Ser-174–Asn-229. The segment covering Ser-84–Gly-106 has biased composition (low complexity). Polar residues-rich tracts occupy residues Thr-113–Gly-129 and Ser-174–Leu-208.

The protein resides in the nucleus. Transcription factor required for yeast cell adherence to silicone substrate. This chain is Transcriptional regulator of yeast form adherence 5 (TRY5), found in Candida albicans (strain SC5314 / ATCC MYA-2876) (Yeast).